The sequence spans 206 residues: A-type ATP synthase subunit E (206 aa).

The protein belongs to the V-ATPase E subunit family. As to quaternary structure, has multiple subunits with at least A(3), B(3), C, D, E, F, H, I and proteolipid K(x).

It localises to the cell membrane. In terms of biological role, component of the A-type ATP synthase that produces ATP from ADP in the presence of a proton gradient across the membrane. This chain is A-type ATP synthase subunit E, found in Methanothermobacter thermautotrophicus (strain ATCC 29096 / DSM 1053 / JCM 10044 / NBRC 100330 / Delta H) (Methanobacterium thermoautotrophicum).